The sequence spans 273 residues: Formamidopyrimidine-DNA glycosylase (273 aa).

Catalysis depends on Pro2, which acts as the Schiff-base intermediate with DNA. Residue Glu3 is the Proton donor of the active site. The active-site Proton donor; for beta-elimination activity is the Lys58. DNA contacts are provided by His91 and Arg110. The segment at 238-272 (QVYGKTGQPCPRCGCLIKKIKVGGRGTHYCPRCQC) adopts an FPG-type zinc-finger fold. Residue Arg262 is the Proton donor; for delta-elimination activity of the active site.

The protein belongs to the FPG family. In terms of assembly, monomer. Zn(2+) serves as cofactor.

The catalysed reaction is Hydrolysis of DNA containing ring-opened 7-methylguanine residues, releasing 2,6-diamino-4-hydroxy-5-(N-methyl)formamidopyrimidine.. It catalyses the reaction 2'-deoxyribonucleotide-(2'-deoxyribose 5'-phosphate)-2'-deoxyribonucleotide-DNA = a 3'-end 2'-deoxyribonucleotide-(2,3-dehydro-2,3-deoxyribose 5'-phosphate)-DNA + a 5'-end 5'-phospho-2'-deoxyribonucleoside-DNA + H(+). In terms of biological role, involved in base excision repair of DNA damaged by oxidation or by mutagenic agents. Acts as a DNA glycosylase that recognizes and removes damaged bases. Has a preference for oxidized purines, such as 7,8-dihydro-8-oxoguanine (8-oxoG). Has AP (apurinic/apyrimidinic) lyase activity and introduces nicks in the DNA strand. Cleaves the DNA backbone by beta-delta elimination to generate a single-strand break at the site of the removed base with both 3'- and 5'-phosphates. This is Formamidopyrimidine-DNA glycosylase from Streptococcus agalactiae serotype Ia (strain ATCC 27591 / A909 / CDC SS700).